The chain runs to 596 residues: Chaperone protein DnaK (596 aa).

Thr-180 bears the Phosphothreonine; by autocatalysis mark.

Belongs to the heat shock protein 70 family.

In terms of biological role, acts as a chaperone. This Thermosipho melanesiensis (strain DSM 12029 / CIP 104789 / BI429) protein is Chaperone protein DnaK.